Reading from the N-terminus, the 385-residue chain is Putative nickel insertion protein (385 aa).

It belongs to the LarC family.

This chain is Putative nickel insertion protein, found in Citrifermentans bemidjiense (strain ATCC BAA-1014 / DSM 16622 / JCM 12645 / Bem) (Geobacter bemidjiensis).